A 273-amino-acid polypeptide reads, in one-letter code: Large ribosomal subunit protein uL2 (273 aa).

The disordered stretch occupies residues 228-273 (VDHPHGGGEGKTSGGRHPVTPWGFPTKGKKTRKNKRTSKFIVKKRK). Residues 254–273 (KGKKTRKNKRTSKFIVKKRK) show a composition bias toward basic residues.

Belongs to the universal ribosomal protein uL2 family. In terms of assembly, part of the 50S ribosomal subunit. Forms a bridge to the 30S subunit in the 70S ribosome.

Its function is as follows. One of the primary rRNA binding proteins. Required for association of the 30S and 50S subunits to form the 70S ribosome, for tRNA binding and peptide bond formation. It has been suggested to have peptidyltransferase activity; this is somewhat controversial. Makes several contacts with the 16S rRNA in the 70S ribosome. The polypeptide is Large ribosomal subunit protein uL2 (Rickettsia peacockii (strain Rustic)).